Here is a 378-residue protein sequence, read N- to C-terminus: Fructose-1,6-bisphosphatase class 1 2 (378 aa).

Mg(2+) contacts are provided by Glu-98, Asp-120, Leu-122, and Asp-123. Substrate is bound by residues Asp-123–Ser-126 and Asn-227. Mg(2+) is bound at residue Glu-299.

It belongs to the FBPase class 1 family. As to quaternary structure, homotetramer. Requires Mg(2+) as cofactor.

The protein localises to the cytoplasm. The catalysed reaction is beta-D-fructose 1,6-bisphosphate + H2O = beta-D-fructose 6-phosphate + phosphate. It functions in the pathway carbohydrate biosynthesis; gluconeogenesis. This chain is Fructose-1,6-bisphosphatase class 1 2, found in Paraburkholderia xenovorans (strain LB400).